The sequence spans 375 residues: Succinyl-diaminopimelate desuccinylase (375 aa).

His66 serves as a coordination point for Zn(2+). Residue Asp68 is part of the active site. Asp99 serves as a coordination point for Zn(2+). The active-site Proton acceptor is Glu133. Positions 134, 162, and 348 each coordinate Zn(2+).

Belongs to the peptidase M20A family. DapE subfamily. As to quaternary structure, homodimer. Requires Zn(2+) as cofactor. The cofactor is Co(2+).

It carries out the reaction N-succinyl-(2S,6S)-2,6-diaminopimelate + H2O = (2S,6S)-2,6-diaminopimelate + succinate. It functions in the pathway amino-acid biosynthesis; L-lysine biosynthesis via DAP pathway; LL-2,6-diaminopimelate from (S)-tetrahydrodipicolinate (succinylase route): step 3/3. In terms of biological role, catalyzes the hydrolysis of N-succinyl-L,L-diaminopimelic acid (SDAP), forming succinate and LL-2,6-diaminopimelate (DAP), an intermediate involved in the bacterial biosynthesis of lysine and meso-diaminopimelic acid, an essential component of bacterial cell walls. The sequence is that of Succinyl-diaminopimelate desuccinylase from Buchnera aphidicola subsp. Acyrthosiphon pisum (strain APS) (Acyrthosiphon pisum symbiotic bacterium).